The chain runs to 197 residues: Isochorismatase domain-containing protein 2 (197 aa).

It belongs to the isochorismatase family.

The sequence is that of Isochorismatase domain-containing protein 2 (isoc2) from Danio rerio (Zebrafish).